The primary structure comprises 602 residues: Elongation factor 4 (602 aa).

In terms of domain architecture, tr-type G spans 6 to 188 (DRIRNFCIIA…RIVTRIPPPG (183 aa)). GTP contacts are provided by residues 18–23 (DHGKST) and 135–138 (NKID).

Belongs to the TRAFAC class translation factor GTPase superfamily. Classic translation factor GTPase family. LepA subfamily.

It localises to the cell membrane. The enzyme catalyses GTP + H2O = GDP + phosphate + H(+). Functionally, required for accurate and efficient protein synthesis under certain stress conditions. May act as a fidelity factor of the translation reaction, by catalyzing a one-codon backward translocation of tRNAs on improperly translocated ribosomes. Back-translocation proceeds from a post-translocation (POST) complex to a pre-translocation (PRE) complex, thus giving elongation factor G a second chance to translocate the tRNAs correctly. Binds to ribosomes in a GTP-dependent manner. The protein is Elongation factor 4 of Pelotomaculum thermopropionicum (strain DSM 13744 / JCM 10971 / SI).